Here is a 605-residue protein sequence, read N- to C-terminus: Copper resistance protein A (605 aa).

The tat-type signal signal peptide spans M1–S41. Positions 100, 102, 142, and 144 each coordinate Cu cation. 3 repeat units span residues D382–M389, D414–M421, and D422–M429. A 3 X 8 AA tandem repeats of D-H-X-X-M-X-G-M region spans residues D382–M429. Positions 538, 541, 543, 586, 587, 588, 592, and 597 each coordinate Cu cation.

Belongs to the multicopper oxidase family. CopA subfamily. Predicted to be exported by the Tat system. The position of the signal peptide cleavage has not been experimentally proven.

Its subcellular location is the periplasm. In terms of biological role, required for the copper-inducible expression of copper resistance. May have oxidase activity. This is Copper resistance protein A (pcoA) from Escherichia coli.